The sequence spans 121 residues: uncharacterized protein (121 aa).

This is an uncharacterized protein from Methanocaldococcus jannaschii (strain ATCC 43067 / DSM 2661 / JAL-1 / JCM 10045 / NBRC 100440) (Methanococcus jannaschii).